Consider the following 356-residue polypeptide: Tyrosine recombinase XerS (356 aa).

Residues leucine 16–threonine 121 enclose the Core-binding (CB) domain. The Tyr recombinase domain maps to glycine 169–aspartate 354. Residues arginine 210, lysine 234, histidine 306, arginine 309, and histidine 332 contribute to the active site. Catalysis depends on tyrosine 341, which acts as the O-(3'-phospho-DNA)-tyrosine intermediate.

Belongs to the 'phage' integrase family. XerS subfamily.

The protein resides in the cytoplasm. Its activity is regulated as follows. FtsK is required for recombination. Functionally, site-specific tyrosine recombinase, which acts by catalyzing the cutting and rejoining of the recombining DNA molecules. Essential to convert dimers of the bacterial chromosome into monomers to permit their segregation at cell division. The polypeptide is Tyrosine recombinase XerS (Streptococcus pneumoniae serotype 19F (strain G54)).